The sequence spans 164 residues: Single-stranded DNA-binding protein 2 (164 aa).

Residues 5–109 enclose the SSB domain; that stretch reads INKVILVGNL…IVADEMQMLG (105 aa). Residues 105–164 are disordered; it reads MQMLGGRSDGGGMGGGGERPQRQTSQRQDYAPRRQARQPSQSPQSSPPPMDDFADDDIPF. Residues 111–122 are compositionally biased toward gly residues; sequence RSDGGGMGGGGE. The short motif at 159–164 is the Important for interaction with partner proteins element; it reads DDDIPF.

In terms of assembly, homotetramer.

Functionally, plays an important role in DNA replication, recombination and repair. Binds to ssDNA and to an array of partner proteins to recruit them to their sites of action during DNA metabolism. The protein is Single-stranded DNA-binding protein 2 (ssb2) of Xylella fastidiosa (strain 9a5c).